A 154-amino-acid polypeptide reads, in one-letter code: Myoglobin (154 aa).

One can recognise a Globin domain in the interval 2-148; it reads GLSDGEWQQV…FRNDIAAKYK (147 aa). Position 4 is a phosphoserine (Ser-4). Nitrite is bound at residue His-65. His-65 provides a ligand contact to O2. Heme b is bound at residue His-94.

The protein belongs to the globin family. As to quaternary structure, monomeric.

It is found in the cytoplasm. The protein localises to the sarcoplasm. It catalyses the reaction Fe(III)-heme b-[protein] + nitric oxide + H2O = Fe(II)-heme b-[protein] + nitrite + 2 H(+). The enzyme catalyses H2O2 + AH2 = A + 2 H2O. Monomeric heme protein which primary function is to store oxygen and facilitate its diffusion within muscle tissues. Reversibly binds oxygen through a pentacoordinated heme iron and enables its timely and efficient release as needed during periods of heightened demand. Depending on the oxidative conditions of tissues and cells, and in addition to its ability to bind oxygen, it also has a nitrite reductase activity whereby it regulates the production of bioactive nitric oxide. Under stress conditions, like hypoxia and anoxia, it also protects cells against reactive oxygen species thanks to its pseudoperoxidase activity. This is Myoglobin (MB) from Equus quagga burchellii (Burchell's zebra).